The sequence spans 156 residues: MSRKNRAPKREVLPDPLYNSKLVTRLINRIMLDGKRGTASSIVYDAFSEIKEATGNDALEVFETAMDNIMPVLEVRARRVGGSNYQVPVEVRPERRTTLGLRWLVTASRARGEHTMKDRLAKEIMDAANNTGASVKKREDTHKMAEANRAFAHFRW.

Belongs to the universal ribosomal protein uS7 family. Part of the 30S ribosomal subunit. Contacts proteins S9 and S11.

In terms of biological role, one of the primary rRNA binding proteins, it binds directly to 16S rRNA where it nucleates assembly of the head domain of the 30S subunit. Is located at the subunit interface close to the decoding center, probably blocks exit of the E-site tRNA. The protein is Small ribosomal subunit protein uS7 of Streptococcus equi subsp. equi (strain 4047).